The primary structure comprises 468 residues: METIKRTKIVDVLKSDAFGTTVNVKGWVRTRRGSKQVNFIALNDGSTINNVQIVVDVDKLGDEFLKPITTGASISVNGILTQSQGKGQSVEIQATEIEIFGTADPATYPLQKKGHSMEFLREIAHLRPRTNTFGAVFRIRHNMAYAIHKFFHDRGFFYFHTPIITASDCEGAGQMFQVTTKNLYDLKKDENGSIIYEDDFFGKQASLTVSGQLEGELAATALGQIYTFGPTFRAENSNTPRHLAEFWMIEPEVAFNDITDNMELAEEFIKYCVQWALDNCMEDIKFLNDMFDKELIARLEGVLKDSFVRLPYTEGIKILEEAVAKGHKFEFPVYWGVDLASEHERFLVEDHFKRPVILTDYPKEIKAFYMKQNEDGKTVRAMDVLFPKIGEIIGGSEREADYDKLMTRIDELGIPMKDMWWYLDTRRFGTVPHSGFGLGFERLLLFVTGMANIRDVIPFPRTPNNAEF.

Belongs to the class-II aminoacyl-tRNA synthetase family. Homodimer.

It is found in the cytoplasm. It catalyses the reaction tRNA(Asn) + L-asparagine + ATP = L-asparaginyl-tRNA(Asn) + AMP + diphosphate + H(+). This chain is Asparagine--tRNA ligase, found in Parabacteroides distasonis (strain ATCC 8503 / DSM 20701 / CIP 104284 / JCM 5825 / NCTC 11152).